The chain runs to 154 residues: Transcriptional repressor NrdR (154 aa).

A zinc finger lies at 3–34 (CPFCRHPDSRVVDSREADEGQAIRRRRSCPEC). The ATP-cone domain maps to 46-136 (LSVVKRSGVT…VYRSFSSAED (91 aa)).

The protein belongs to the NrdR family. Zn(2+) serves as cofactor.

Negatively regulates transcription of bacterial ribonucleotide reductase nrd genes and operons by binding to NrdR-boxes. The chain is Transcriptional repressor NrdR from Rhodococcus jostii (strain RHA1).